A 110-amino-acid polypeptide reads, in one-letter code: MTTVHSIADPCDPEVSPTNNRHLTVSYASRYPDYTRIPALTMKGQWLEAAGFATGTEVDVRVMNGCIVLTAQQPQPEESELMQSLRQVSKLSARKQKQVQAFIDVMAGSK.

The region spanning 29–74 is the SpoVT-AbrB domain; it reads SRYPDYTRIPALTMKGQWLEAAGFATGTEVDVRVMNGCIVLTAQQP.

The protein belongs to the SymE family.

Its subcellular location is the cytoplasm. Its function is as follows. Involved in the degradation and recycling of damaged RNA. It is itself a target for degradation by the ATP-dependent protease Lon. This chain is Endoribonuclease SymE, found in Salmonella heidelberg (strain SL476).